The sequence spans 363 residues: UDP-N-acetylglucosamine--N-acetylmuramyl-(pentapeptide) pyrophosphoryl-undecaprenol N-acetylglucosamine transferase (363 aa).

UDP-N-acetyl-alpha-D-glucosamine is bound by residues 10-12 (TGG), Asn124, Ser195, and Gln295.

Belongs to the glycosyltransferase 28 family. MurG subfamily.

It is found in the cell membrane. It catalyses the reaction di-trans,octa-cis-undecaprenyl diphospho-N-acetyl-alpha-D-muramoyl-L-alanyl-D-glutamyl-meso-2,6-diaminopimeloyl-D-alanyl-D-alanine + UDP-N-acetyl-alpha-D-glucosamine = di-trans,octa-cis-undecaprenyl diphospho-[N-acetyl-alpha-D-glucosaminyl-(1-&gt;4)]-N-acetyl-alpha-D-muramoyl-L-alanyl-D-glutamyl-meso-2,6-diaminopimeloyl-D-alanyl-D-alanine + UDP + H(+). Its pathway is cell wall biogenesis; peptidoglycan biosynthesis. Functionally, cell wall formation. Catalyzes the transfer of a GlcNAc subunit on undecaprenyl-pyrophosphoryl-MurNAc-pentapeptide (lipid intermediate I) to form undecaprenyl-pyrophosphoryl-MurNAc-(pentapeptide)GlcNAc (lipid intermediate II). The polypeptide is UDP-N-acetylglucosamine--N-acetylmuramyl-(pentapeptide) pyrophosphoryl-undecaprenol N-acetylglucosamine transferase (Bacillus subtilis (strain 168)).